Reading from the N-terminus, the 235-residue chain is Protein FEV (235 aa).

The ETS DNA-binding region spans 58–138; the sequence is IQLWQFLLEL…HGKRYAYKFD (81 aa).

Belongs to the ETS family. Expressed by serotonergic neurons in anterior and posterior raphe.

It is found in the nucleus. In terms of biological role, functions as a transcriptional regulator. Functions in the differentiation and the maintenance of the central serotonergic neurons. May play a role in cell growth. The sequence is that of Protein FEV (fev) from Danio rerio (Zebrafish).